The sequence spans 231 residues: Glutathione-S-transferase (231 aa).

A GST N-terminal domain is found at 15–98 (LFAVKGTATS…YIADAYDKDG (84 aa)).

Belongs to the GST superfamily.

The catalysed reaction is RX + glutathione = an S-substituted glutathione + a halide anion + H(+). Functionally, conjugation of reduced glutathione to a wide number of exogenous and endogenous hydrophobic electrophiles. In Alternaria alternata (Alternaria rot fungus), this protein is Glutathione-S-transferase.